We begin with the raw amino-acid sequence, 201 residues long: Peroxiredoxin 2 (201 aa).

The Thioredoxin domain maps to 3 to 156 (VYLGKRAPDF…ILRSVKALQA (154 aa)). Catalysis depends on C44, which acts as the Cysteine sulfenic acid (-SOH) intermediate. R119 contacts substrate.

This sequence belongs to the peroxiredoxin family. Prx6 subfamily. Homodecamer. Pentamer of dimers that assemble into a ring structure.

The protein localises to the cytoplasm. It catalyses the reaction a hydroperoxide + [thioredoxin]-dithiol = an alcohol + [thioredoxin]-disulfide + H2O. Functionally, thiol-specific peroxidase that catalyzes the reduction of hydrogen peroxide and organic hydroperoxides to water and alcohols, respectively. Plays a role in cell protection against oxidative stress by detoxifying peroxides. The protein is Peroxiredoxin 2 of Picrophilus torridus (strain ATCC 700027 / DSM 9790 / JCM 10055 / NBRC 100828 / KAW 2/3).